The primary structure comprises 135 residues: NNCPQDWLPMNGLCYKIFDELKAWKDAEMFCRKYKPGCHLASIHLYGESPEIAEYISDYHKGQSEVWIGLWDEKKDFSWEWTDRSCTDYLSWDKNQPDHYKNKEFCVELVSYTGYRLWNDQVCESKNAFLCQCKF.

Disulfide bonds link Cys-3-Cys-14, Cys-31-Cys-131, Cys-38-Cys-133, and Cys-106-Cys-123. Residues 10 to 132 (MNGLCYKIFD…CESKNAFLCQ (123 aa)) form the C-type lectin domain. Residues Gln-96, Asp-98, Glu-104, Asn-119, and Asp-120 each coordinate Ca(2+). The Galactose-binding motif lies at 96 to 98 (QPD).

It belongs to the true venom lectin family. In terms of assembly, homodimer; disulfide-linked. In terms of tissue distribution, expressed by the venom gland.

The protein resides in the secreted. Its function is as follows. This lectin displays hemagglutinating activity on dog (128'000 HU/mg) and cat erythrocytes, that is inhibited by beta-galactosides (D-galactose, D-lactose, and N-acetyl-D-galactosamine) and EDTA. In addition, has been shown to hemagglutinate promastigote forms of Leishmania amazonensis. Also inhibits Gram-positive (S.aureus ATCC 25923) (MIC is 31.25 ug/ml) but not Gram-negative (E.coli ATCC 25922) bacteria. Is a calcium-dependent lectin. The chain is C-type lectin BpLec from Bothrops pauloensis (Neuwied's lancehead).